The primary structure comprises 102 residues: Protein CASC2, isoform 3 (102 aa).

As to expression, expressed in normal and neoplastic endometrial tissues.

Its function is as follows. May act as a potential tumor suppressor. The sequence is that of Protein CASC2, isoform 3 (CASC2) from Homo sapiens (Human).